A 485-amino-acid polypeptide reads, in one-letter code: Glycogen synthase (485 aa).

Lys-15 serves as a coordination point for ADP-alpha-D-glucose.

It belongs to the glycosyltransferase 1 family. Bacterial/plant glycogen synthase subfamily.

The enzyme catalyses [(1-&gt;4)-alpha-D-glucosyl](n) + ADP-alpha-D-glucose = [(1-&gt;4)-alpha-D-glucosyl](n+1) + ADP + H(+). It participates in glycan biosynthesis; glycogen biosynthesis. Synthesizes alpha-1,4-glucan chains using ADP-glucose. This Fervidobacterium nodosum (strain ATCC 35602 / DSM 5306 / Rt17-B1) protein is Glycogen synthase.